We begin with the raw amino-acid sequence, 227 residues long: Prolactin (227 aa).

The N-terminal stretch at 1–28 is a signal peptide; the sequence is MNIKGSPWKGSLLLLLVSNLLLCQNVAP. A disulfide bond links Cys32 and Cys39. Residue Ser54 is modified to Phosphoserine. N-linked (GlcNAc...) asparagine glycosylation occurs at Asn59. Residues Ser62 and Ser118 each carry the phosphoserine modification. 2 disulfide bridges follow: Cys86–Cys202 and Cys219–Cys227.

Belongs to the somatotropin/prolactin family. In terms of assembly, interacts with PRLR.

The protein localises to the secreted. Prolactin acts primarily on the mammary gland by promoting lactation. This Macaca mulatta (Rhesus macaque) protein is Prolactin (PRL).